A 413-amino-acid polypeptide reads, in one-letter code: Putative tRNA pseudouridine synthase C16C4.06c (413 aa).

The active-site Nucleophile is D96. Y154 contributes to the substrate binding site.

It belongs to the tRNA pseudouridine synthase TruA family.

The protein localises to the cytoplasm. The protein resides in the nucleus. It carries out the reaction a uridine in tRNA = a pseudouridine in tRNA. The sequence is that of Putative tRNA pseudouridine synthase C16C4.06c from Schizosaccharomyces pombe (strain 972 / ATCC 24843) (Fission yeast).